Consider the following 552-residue polypeptide: Gamma-aminobutyric acid receptor subunit alpha-4 (552 aa).

Residues 1–35 (MVSVQKVPAIVLCSGVSLALLHVLCLATCLNESPG) form the signal peptide. Topologically, residues 36–259 (QNSKDEKLCP…FHLRRKMGYF (224 aa)) are extracellular. Asn-47 carries N-linked (GlcNAc...) asparagine glycosylation. Arg-100 is a 4-aminobutanoate binding site. N-linked (GlcNAc...) asparagine glycosylation is found at Asn-144 and Asn-157. 4-aminobutanoate is bound at residue Thr-163. Cys-172 and Cys-186 form a disulfide bridge. A helical transmembrane segment spans residues 260 to 280 (MIQTYIPCIMTVILSQVSFWI). Residues 281 to 284 (NKES) are Cytoplasmic-facing. A helical membrane pass occupies residues 285–305 (VPARTVFGITTVLTMTTLSIS). Topologically, residues 306-318 (ARHSLPKVSYATA) are extracellular. The helical transmembrane segment at 319–341 (MDWFIAVCFAFVFSALIEFAAVN) threads the bilayer. Residues 342–515 (YFTNIQMQKA…PPPSGSGTSK (174 aa)) lie on the Cytoplasmic side of the membrane. 3 disordered regions span residues 353 to 436 (KKIS…NPFS), 448 to 470 (ARGL…PLRS), and 486 to 513 (TTVN…GSGT). The segment covering 403-423 (RTEVGNHSSKTTAAQESSETT) has biased composition (polar residues). Low complexity-rich tracts occupy residues 448 to 458 (ARGLSSAASPS) and 486 to 499 (TTVN…NVSA). The segment covering 500 to 509 (TPPPSAPPPS) has biased composition (pro residues). A helical transmembrane segment spans residues 516–538 (IDKYARILFPVTFGAFNMVYWVV). Topologically, residues 539–552 (YLSKDTMEKSESLM) are extracellular.

The protein belongs to the ligand-gated ion channel (TC 1.A.9) family. Gamma-aminobutyric acid receptor (TC 1.A.9.5) subfamily. GABRA4 sub-subfamily. Heteropentamer, formed by a combination of alpha (GABRA1-6), beta (GABRB1-3), gamma (GABRG1-3), delta (GABRD), epsilon (GABRE), rho (GABRR1-3), pi (GABRP) and theta (GABRQ) chains, each subunit exhibiting distinct physiological and pharmacological properties. Expressed in the brain.

It localises to the cell membrane. It is found in the postsynaptic cell membrane. Its activity is regulated as follows. Potentiated by histamine. Functionally, alpha subunit of the heteropentameric ligand-gated chloride channel gated by gamma-aminobutyric acid (GABA), a major inhibitory neurotransmitter in the brain. GABA-gated chloride channels, also named GABA(A) receptors (GABAAR), consist of five subunits arranged around a central pore and contain GABA active binding site(s) located at the alpha and beta subunit interface(s). Alpha-4/GABRA4 subunit often assembles with delta or gamma-2 subunits, in combination with beta subunits. When activated by GABA, GABAARs selectively allow the flow of chloride anions across the cell membrane down their electrochemical gradient. GABAARs containing alpha-4 are predominantly extrasynaptic, contributing to tonic inhibition in dentate granule cells and thalamic relay neurons. Extrasynaptic alpha-4-containing GABAARs control levels of excitability and network activity. GABAAR containing alpha-4-beta-3-delta subunits can simultaneously bind GABA and histamine where histamine binds at the interface of two neighboring beta subunits, which may be involved in the regulation of sleep and wakefulness. The polypeptide is Gamma-aminobutyric acid receptor subunit alpha-4 (Rattus norvegicus (Rat)).